The chain runs to 479 residues: PTS system glucose-specific EIICB component (479 aa).

Residues 1-388 (MFKNAFSNLQ…FNLKTPGREK (388 aa)) enclose the PTS EIIC type-1 domain. The next 9 helical transmembrane spans lie at 15 to 35 (SLMLPVSVLPIAGILLGIGSA), 51 to 71 (AGSSVFSNMPLIFAIGIALGF), 80 to 100 (LAAVVSYGIMTKTLSITIPIF), 112 to 132 (YLLDTGILGGIIAGSISAYIF), 152 to 172 (FVPIASGLISIIFGCILSIIW), 252 to 272 (GGFIFKMYGLPFAALAMWHCA), 280 to 300 (IGGIMMSGALTAILTGITEPI), 305 to 325 (ILVAPILYVIHAILAGLAFPI), and 356 to 376 (LFPIVGLFYGILYYGIFYFMI). The PTS EIIB type-1 domain occupies 399–479 (KETALLVISI…IDNYMSNTNQ (81 aa)). Cysteine 421 (phosphocysteine intermediate; for EIIB activity) is an active-site residue. Phosphocysteine is present on cysteine 421.

Its subcellular location is the cell inner membrane. The enzyme catalyses N(pros)-phospho-L-histidyl-[protein] + D-glucose(out) = D-glucose 6-phosphate(in) + L-histidyl-[protein]. Functionally, the phosphoenolpyruvate-dependent sugar phosphotransferase system (sugar PTS), a major carbohydrate active transport system, catalyzes the phosphorylation of incoming sugar substrates concomitantly with their translocation across the cell membrane. The enzyme II complex composed of PtsG and Crr is involved in glucose transport. This is PTS system glucose-specific EIICB component (ptsG) from Buchnera aphidicola subsp. Baizongia pistaciae (strain Bp).